Here is a 739-residue protein sequence, read N- to C-terminus: UPF0313 protein YgiQ (739 aa).

In terms of domain architecture, Radical SAM core spans 372-650 (AYEMIRFSVN…KALLRYHDPA (279 aa)). 3 residues coordinate [4Fe-4S] cluster: C386, C390, and C393. Residues 685–739 (REARRQNRNTRPALTKHTPMATQRQTPATAKKASSTQSRPVNAGAKKRPKAAVGR) form a disordered region. The segment covering 704–724 (MATQRQTPATAKKASSTQSRP) has biased composition (polar residues). A compositionally biased stretch (basic residues) spans 729–739 (AKKRPKAAVGR).

Belongs to the UPF0313 family. [4Fe-4S] cluster serves as cofactor.

The chain is UPF0313 protein YgiQ from Shigella flexneri.